The chain runs to 734 residues: Photosystem I P700 chlorophyll a apoprotein A2 (734 aa).

The next 8 membrane-spanning stretches (helical) occupy residues isoleucine 46 to alanine 69, leucine 135 to glutamine 158, leucine 175 to isoleucine 199, methionine 273 to tyrosine 291, leucine 330 to tyrosine 353, alanine 369 to isoleucine 395, alanine 417 to histidine 439, and phenylalanine 517 to valine 535. Cysteine 559 and cysteine 568 together coordinate [4Fe-4S] cluster. A run of 2 helical transmembrane segments spans residues alanine 575–tryptophan 596 and leucine 643–isoleucine 665. The chlorophyll a site is built by histidine 654, methionine 662, and tyrosine 670. Tryptophan 671 provides a ligand contact to phylloquinone. Residues leucine 707–alanine 727 traverse the membrane as a helical segment.

Belongs to the PsaA/PsaB family. The PsaA/B heterodimer binds the P700 chlorophyll special pair and subsequent electron acceptors. PSI consists of a core antenna complex that captures photons, and an electron transfer chain that converts photonic excitation into a charge separation. The eukaryotic PSI reaction center is composed of at least 11 subunits. It depends on P700 is a chlorophyll a/chlorophyll a' dimer, A0 is one or more chlorophyll a, A1 is one or both phylloquinones and FX is a shared 4Fe-4S iron-sulfur center. as a cofactor.

It is found in the plastid. The protein resides in the chloroplast thylakoid membrane. The enzyme catalyses reduced [plastocyanin] + hnu + oxidized [2Fe-2S]-[ferredoxin] = oxidized [plastocyanin] + reduced [2Fe-2S]-[ferredoxin]. PsaA and PsaB bind P700, the primary electron donor of photosystem I (PSI), as well as the electron acceptors A0, A1 and FX. PSI is a plastocyanin-ferredoxin oxidoreductase, converting photonic excitation into a charge separation, which transfers an electron from the donor P700 chlorophyll pair to the spectroscopically characterized acceptors A0, A1, FX, FA and FB in turn. Oxidized P700 is reduced on the lumenal side of the thylakoid membrane by plastocyanin. This chain is Photosystem I P700 chlorophyll a apoprotein A2, found in Physcomitrium patens (Spreading-leaved earth moss).